Consider the following 417-residue polypeptide: Lipoyl synthase, mitochondrial (417 aa).

The N-terminal 26 residues, 1 to 26, are a transit peptide targeting the mitochondrion; sequence MAVCARGLRCLGTPAVSLRLAASRSY. Residues 27–61 form a disordered region; that stretch reads ATTTPPDPAIPNTPGAAATSSPAKRPRTSFQDKLN. The span at 44–58 shows a compositional bias: polar residues; sequence ATSSPAKRPRTSFQD. Cys-134, Cys-139, Cys-145, Cys-165, Cys-169, Cys-172, and Ser-380 together coordinate [4Fe-4S] cluster. Residues 148–369 enclose the Radical SAM core domain; sequence GGSKSAATAT…KEKALEMGFL (222 aa). Positions 398-417 are disordered; that stretch reads ESTGPGSASVQDVATGDLVR.

The protein belongs to the radical SAM superfamily. Lipoyl synthase family. It depends on [4Fe-4S] cluster as a cofactor.

It is found in the mitochondrion. The catalysed reaction is [[Fe-S] cluster scaffold protein carrying a second [4Fe-4S](2+) cluster] + N(6)-octanoyl-L-lysyl-[protein] + 2 oxidized [2Fe-2S]-[ferredoxin] + 2 S-adenosyl-L-methionine + 4 H(+) = [[Fe-S] cluster scaffold protein] + N(6)-[(R)-dihydrolipoyl]-L-lysyl-[protein] + 4 Fe(3+) + 2 hydrogen sulfide + 2 5'-deoxyadenosine + 2 L-methionine + 2 reduced [2Fe-2S]-[ferredoxin]. The protein operates within protein modification; protein lipoylation via endogenous pathway; protein N(6)-(lipoyl)lysine from octanoyl-[acyl-carrier-protein]: step 2/2. Functionally, catalyzes the radical-mediated insertion of two sulfur atoms into the C-6 and C-8 positions of the octanoyl moiety bound to the lipoyl domains of lipoate-dependent enzymes, thereby converting the octanoylated domains into lipoylated derivatives. This chain is Lipoyl synthase, mitochondrial, found in Uncinocarpus reesii (strain UAMH 1704).